Consider the following 277-residue polypeptide: Protein OPG166 (277 aa).

N-linked (GlcNAc...) asparagine; by host glycans are attached at residues N29 and N58. The next 5 membrane-spanning stretches (helical) occupy residues 124-144 (TMLM…EIAY), 156-176 (GILQ…AFLF), 186-206 (IIGL…KVFS), 219-239 (LIIY…GLSL), and 247-267 (LLLS…LFLV).

The protein belongs to the orthopoxvirus OPG166 protein family.

The protein localises to the host membrane. Functionally, promotes, when overexpressed, the influx of extracellular Ca(2+), leading to membrane permeability and host cell necrosis. This Cynomys gunnisoni (Gunnison's prairie dog) protein is Protein OPG166 (OPG166).